Reading from the N-terminus, the 344-residue chain is L-rhamnose-proton symporter (344 aa).

The next 10 helical transmembrane spans lie at 4–24 (AITMGIFWHLIGAASAACFYA), 38–58 (WSVGGTVSWLILPWTISAILL), 72–92 (TLLPVFLFGAMWGIGNINYGL), 101–121 (MGIGIAIGITLIVGTLMTPIL), 137–157 (TLLGVLVAVIGVGIVTRAGQL), 175–195 (LVLAVMCGIFSAGMSFAMNAA), 214–234 (LPSYVVIMGGGALVNLGFCFI), 259–279 (VLLSALGGLMWYLQFFFYAWG), 290–310 (MSWMLHMSFYVLCGGMVGLVL), and 321–341 (VGVLSLGCVVIIIAANIVGLG).

The protein belongs to the L-rhamnose transporter (TC 2.A.7.6) family.

The protein localises to the cell inner membrane. The catalysed reaction is L-rhamnopyranose(in) + H(+)(in) = L-rhamnopyranose(out) + H(+)(out). Functionally, uptake of L-rhamnose across the cytoplasmic membrane with the concomitant transport of protons into the cell (symport system). This Enterobacter sp. (strain 638) protein is L-rhamnose-proton symporter.